Reading from the N-terminus, the 973-residue chain is 109 kDa U5 small nuclear ribonucleoprotein component GFL (973 aa).

Positions 1 to 40 (MDGSLYGECGNYIGPEIESDRDSDDSVEDEDLQEPGGSNG) are disordered. Residues 17-33 (IESDRDSDDSVEDEDLQ) show a composition bias toward acidic residues. In terms of domain architecture, tr-type G spans 122–408 (ALVRNVALVG…LGVTLSNSAY (287 aa)). The G1 stretch occupies residues 131–138 (GHLQHGKT). Residue 131 to 138 (GHLQHGKT) participates in GTP binding. The G2 stretch occupies residues 175 to 179 (NISIK). Residues 201–204 (DTPG) are G3. GTP-binding positions include 201 to 205 (DTPGN) and 255 to 258 (NKVD). The interval 255–258 (NKVD) is G4. Residues 381–383 (YSQ) form a G5 region.

Belongs to the TRAFAC class translation factor GTPase superfamily. Classic translation factor GTPase family. In terms of tissue distribution, expressed in flower buds, open flowers and siliques. Expressed at low levels in rosettes leaves, cauline leaves and stems.

It localises to the nucleus speckle. Splicing factor involved in pre-mRNA splicing and component of the spliceosome. The protein is 109 kDa U5 small nuclear ribonucleoprotein component GFL of Arabidopsis thaliana (Mouse-ear cress).